The primary structure comprises 421 residues: D-amino acid dehydrogenase (421 aa).

3 to 17 is an FAD binding site; it reads VTILGAGVIGVTSAY.

This sequence belongs to the DadA oxidoreductase family. It depends on FAD as a cofactor.

The enzyme catalyses a D-alpha-amino acid + A + H2O = a 2-oxocarboxylate + AH2 + NH4(+). It functions in the pathway amino-acid degradation; D-alanine degradation; NH(3) and pyruvate from D-alanine: step 1/1. Its function is as follows. Oxidative deamination of D-amino acids. The sequence is that of D-amino acid dehydrogenase from Allorhizobium ampelinum (strain ATCC BAA-846 / DSM 112012 / S4) (Agrobacterium vitis (strain S4)).